A 183-amino-acid chain; its full sequence is UPF0397 protein EAT1b_2102 (183 aa).

5 consecutive transmembrane segments (helical) span residues 9 to 29 (IVATGIGAAVFIILSRFAAIP), 42 to 62 (AFLAFMAVLFGPITAGLIGLI), 74 to 94 (SPWWSWVIVSGFVGLGIGLIA), 117 to 137 (AVVQAIGWIVIAPVLDILIYA), and 147 to 167 (GAVAATSNILTVGVIGTLLLV).

Belongs to the UPF0397 family.

It is found in the cell membrane. The sequence is that of UPF0397 protein EAT1b_2102 from Exiguobacterium sp. (strain ATCC BAA-1283 / AT1b).